Reading from the N-terminus, the 226-residue chain is Urease accessory protein UreF (226 aa).

The protein belongs to the UreF family. As to quaternary structure, ureD, UreF and UreG form a complex that acts as a GTP-hydrolysis-dependent molecular chaperone, activating the urease apoprotein by helping to assemble the nickel containing metallocenter of UreC. The UreE protein probably delivers the nickel.

The protein resides in the cytoplasm. In terms of biological role, required for maturation of urease via the functional incorporation of the urease nickel metallocenter. The chain is Urease accessory protein UreF from Burkholderia vietnamiensis (strain G4 / LMG 22486) (Burkholderia cepacia (strain R1808)).